We begin with the raw amino-acid sequence, 391 residues long: 1-deoxy-D-xylulose 5-phosphate reductoisomerase (391 aa).

NADPH is bound at residue Asn109. Lys110 serves as a coordination point for 1-deoxy-D-xylulose 5-phosphate. Glu111 is an NADPH binding site. Asp135 lines the Mn(2+) pocket. Positions 136, 137, 171, and 194 each coordinate 1-deoxy-D-xylulose 5-phosphate. Mn(2+) is bound at residue Glu137. Gly200 is a binding site for NADPH. The 1-deoxy-D-xylulose 5-phosphate site is built by Ser207, Asn212, Arg213, and Glu216. Position 216 (Glu216) interacts with Mn(2+).

It belongs to the DXR family. In terms of assembly, homodimer. Requires Mg(2+) as cofactor. It depends on Mn(2+) as a cofactor.

It catalyses the reaction 2-C-methyl-D-erythritol 4-phosphate + NADP(+) = 1-deoxy-D-xylulose 5-phosphate + NADPH + H(+). It functions in the pathway isoprenoid biosynthesis; isopentenyl diphosphate biosynthesis via DXP pathway; isopentenyl diphosphate from 1-deoxy-D-xylulose 5-phosphate: step 1/6. Its function is as follows. Catalyzes the NADPH-dependent rearrangement and reduction of 1-deoxy-D-xylulose-5-phosphate (DXP) to 2-C-methyl-D-erythritol 4-phosphate (MEP). This chain is 1-deoxy-D-xylulose 5-phosphate reductoisomerase, found in Blochmanniella floridana.